The chain runs to 249 residues: Proteasome subunit alpha (249 aa).

A disordered region spans residues 229–249; the sequence is EAREAEEAAEAQSSEDGGATD.

It belongs to the peptidase T1A family. In terms of assembly, the 20S proteasome core is composed of 14 alpha and 14 beta subunits that assemble into four stacked heptameric rings, resulting in a barrel-shaped structure. The two inner rings, each composed of seven catalytic beta subunits, are sandwiched by two outer rings, each composed of seven alpha subunits. The catalytic chamber with the active sites is on the inside of the barrel. Has a gated structure, the ends of the cylinder being occluded by the N-termini of the alpha-subunits. Is capped by the proteasome-associated ATPase, ARC.

It is found in the cytoplasm. It participates in protein degradation; proteasomal Pup-dependent pathway. With respect to regulation, the formation of the proteasomal ATPase ARC-20S proteasome complex, likely via the docking of the C-termini of ARC into the intersubunit pockets in the alpha-rings, may trigger opening of the gate for substrate entry. Interconversion between the open-gate and close-gate conformations leads to a dynamic regulation of the 20S proteasome proteolysis activity. Component of the proteasome core, a large protease complex with broad specificity involved in protein degradation. The protein is Proteasome subunit alpha of Thermobifida fusca (strain YX).